A 646-amino-acid chain; its full sequence is Rho guanine nucleotide exchange factor 7 (646 aa).

The SH3 domain occupies 6–65 (NSQLVVRAKFNFQQTNEDELSFSKGDVIHVTRVEEGGWWEGTHNGRTGWFPSNYVREIKP). S7, S71, and S79 each carry phosphoserine. The DH domain maps to 93–273 (YYNVVLQNIL…KNLSAQCQEV (181 aa)). In terms of domain architecture, PH spans 295-400 (DIKTLGSVTY…WVEHLQRQTK (106 aa)). S340 is subject to Phosphoserine. Disordered regions lie at residues 402–464 (TSVS…GPLE) and 500–520 (KTMKKLLPKRKPERKPSDEEF). Residues 415–428 (PSHTLPSHPLTPSS) are compositionally biased toward polar residues. The span at 500–512 (KTMKKLLPKRKPE) shows a compositional bias: basic residues. 2 positions are modified to phosphoserine: S516 and S560.

Interacts with SCRIB; interaction is direct and may play a role in regulation of apoptosis. Interacts with PAK kinases through the SH3 domain. Interacts with GIT1 and probably TGFB1I1. Interacts with ITCH and PARVB. Interacts with FRMPD4 (via N-terminus). Interacts with CaMK1. Interacts with PTK2/FAK1 and RAC1. Interacts with BIN2. Interacts with YWHAZ. Interacts (via PH domain) with NOX1 (via FAD-binding FR-type domain). Phosphorylated on Ser-516 by CaMK1; enhancement of GEF activity and downstream activation of RAC1. Phosphorylated by PTK2/FAK1; this promotes interaction with RAC1.

It is found in the cell junction. Its subcellular location is the focal adhesion. The protein resides in the cell projection. The protein localises to the ruffle. It localises to the cytoplasm. It is found in the cell cortex. Its subcellular location is the lamellipodium. Functionally, acts as a RAC1 guanine nucleotide exchange factor (GEF) and can induce membrane ruffling. Functions in cell migration, attachment and cell spreading. Promotes targeting of RAC1 to focal adhesions. May function as a positive regulator of apoptosis. Downstream of NMDA receptors and CaMKK-CaMK1 signaling cascade, promotes the formation of spines and synapses in hippocampal neurons. This Rattus norvegicus (Rat) protein is Rho guanine nucleotide exchange factor 7 (Arhgef7).